We begin with the raw amino-acid sequence, 377 residues long: Homocitrate synthase 1 (377 aa).

The Pyruvate carboxyltransferase domain occupies 4–255 (VLINDTTLRD…DMGIDTPRLL (252 aa)).

Belongs to the alpha-IPM synthase/homocitrate synthase family.

It catalyses the reaction acetyl-CoA + 2-oxoglutarate + H2O = (2R)-homocitrate + CoA + H(+). In terms of biological role, this protein is a Fe-Mo-cofactor biosynthetic component. The sequence is that of Homocitrate synthase 1 (nifV1) from Nostoc sp. (strain PCC 7120 / SAG 25.82 / UTEX 2576).